The chain runs to 163 residues: Large ribosomal subunit protein uL11 (163 aa).

Residues 1 to 26 are disordered; the sequence is MAETIEVLVAGGQADPGPPLGPELGP.

The protein belongs to the universal ribosomal protein uL11 family. Part of the ribosomal stalk of the 50S ribosomal subunit. Interacts with L10 and the large rRNA to form the base of the stalk. L10 forms an elongated spine to which L12 dimers bind in a sequential fashion forming a multimeric L10(L12)X complex.

Functionally, forms part of the ribosomal stalk which helps the ribosome interact with GTP-bound translation factors. The protein is Large ribosomal subunit protein uL11 of Halobacterium salinarum (strain ATCC 29341 / DSM 671 / R1).